The following is a 453-amino-acid chain: Gastrin/cholecystokinin type B receptor (453 aa).

Over 1–57 (MDLLKLNRSLQGPGPGSGSSLCRPGVSLLNSSSAGNLSCETPRIRGTGTRELELTIR) the chain is Extracellular. N-linked (GlcNAc...) asparagine glycosylation is found at N7, N30, and N36. A helical transmembrane segment spans residues 58 to 79 (ITLYAVIFLMSVGGNVLIIVVL). Over 80 to 87 (GLSRRLRT) the chain is Cytoplasmic. The chain crosses the membrane as a helical span at residues 88–109 (VTNAFLLSLAVSDLLLAVACMP). At 110–131 (FTLLPNLMGTFIFGTVICKAVS) the chain is on the extracellular side. A disulfide bridge links C127 with C205. Residues 132 to 150 (YLMGVSVSVSTLNLAAIAL) form a helical membrane-spanning segment. The Cytoplasmic segment spans residues 151–170 (ERYSAICRPLQARVWQTRSH). A helical membrane pass occupies residues 171 to 189 (AARVILATWLLSGLLMVPY). Residues 190–219 (PVYTVVQPVGPRILQCMHLWPSERVQQMWS) are Extracellular-facing. A helical transmembrane segment spans residues 220–242 (VLLLILLFFIPGVVMAVAYGLIS). Residues 243–339 (RELYLGLRFD…KLLAKKRVVR (97 aa)) lie on the Cytoplasmic side of the membrane. The interval 257–276 (SETQSRVRNQGGLPGGAAAP) is disordered. A helical transmembrane segment spans residues 340 to 361 (MLLVIVLLFFVCWLPVYSANTW). Residues 362 to 379 (RAFDGPGARRALAGAPIS) are Extracellular-facing. Residues 380–400 (FIHLLSYTSACANPLVYCFMH) form a helical membrane-spanning segment. At 401–453 (RRFRQACLDTCARCCPRPPRARPRPLPDEDPPTPSIASLSRLSYTTISTLGPG) the chain is on the cytoplasmic side. The S-palmitoyl cysteine moiety is linked to residue C414.

The protein belongs to the G-protein coupled receptor 1 family.

It localises to the cell membrane. In terms of biological role, receptor for gastrin and cholecystokinin. The CCK-B receptors occur throughout the central nervous system where they modulate anxiety, analgesia, arousal, and neuroleptic activity. This receptor mediates its action by association with G proteins that activate a phosphatidylinositol-calcium second messenger system. The polypeptide is Gastrin/cholecystokinin type B receptor (Cckbr) (Mus musculus (Mouse)).